Here is a 121-residue protein sequence, read N- to C-terminus: Large ribosomal subunit protein bL19 (121 aa).

Belongs to the bacterial ribosomal protein bL19 family.

Its function is as follows. This protein is located at the 30S-50S ribosomal subunit interface and may play a role in the structure and function of the aminoacyl-tRNA binding site. This chain is Large ribosomal subunit protein bL19, found in Neisseria meningitidis serogroup C (strain 053442).